Reading from the N-terminus, the 501-residue chain is Myosin heavy chain, embryonic smooth muscle isoform (501 aa).

Residues 1–457 (REAREKETKA…TLKNRLRRGG (457 aa)) adopt a coiled-coil conformation. Positions 1-501 (REAREKETKA…VNETQPPQSE (501 aa)) are rodlike tail (S2 and LMM domains). Disordered stretches follow at residues 182 to 202 (YQRE…QSKE), 221 to 254 (LASS…ALLD), and 397 to 501 (MEKA…PQSE). The segment covering 223–233 (SSERARRHAEQ) has biased composition (basic and acidic residues). Positions 492–501 (VNETQPPQSE) are enriched in polar residues.

As to quaternary structure, muscle myosin is a hexameric protein that consists of 2 heavy chain subunits (MHC), 2 alkali light chain subunits (MLC) and 2 regulatory light chain subunits (MLC-2).

It localises to the cytoplasm. It is found in the myofibril. Muscle contraction. This is Myosin heavy chain, embryonic smooth muscle isoform from Oryctolagus cuniculus (Rabbit).